Here is a 526-residue protein sequence, read N- to C-terminus: Probable 1,4-alpha-glucan branching enzyme MT3115 (526 aa).

Residue Glu205 is the Nucleophile of the active site. Substrate is bound by residues Arg251 and Gly268. The Proton donor role is filled by Asp344. Substrate contacts are provided by Trp396 and Asp462.

The protein belongs to the glycosyl hydrolase 57 family.

The enzyme catalyses Transfers a segment of a (1-&gt;4)-alpha-D-glucan chain to a primary hydroxy group in a similar glucan chain.. Functionally, catalyzes the formation of branch points in alpha-glucans by cleavage of an alpha-1,4 glycosidic bond and subsequent transfer of the cleaved-off oligosaccharide to a new alpha-1,6 position. Is probably involved in the biosynthesis of 6-O-methylglucosyl lipopolysaccharides (MGLP). The protein is Probable 1,4-alpha-glucan branching enzyme MT3115 of Mycobacterium tuberculosis (strain CDC 1551 / Oshkosh).